The primary structure comprises 483 residues: Glutamate--tRNA ligase (483 aa).

The 'HIGH' region signature appears at 11-21 (PSPTGHLHIGN). A 'KMSKS' region motif is present at residues 252 to 256 (KLSKR). Lysine 255 serves as a coordination point for ATP.

Belongs to the class-I aminoacyl-tRNA synthetase family. Glutamate--tRNA ligase type 1 subfamily. In terms of assembly, monomer.

Its subcellular location is the cytoplasm. The enzyme catalyses tRNA(Glu) + L-glutamate + ATP = L-glutamyl-tRNA(Glu) + AMP + diphosphate. Catalyzes the attachment of glutamate to tRNA(Glu) in a two-step reaction: glutamate is first activated by ATP to form Glu-AMP and then transferred to the acceptor end of tRNA(Glu). The polypeptide is Glutamate--tRNA ligase (Bacillus velezensis (strain DSM 23117 / BGSC 10A6 / LMG 26770 / FZB42) (Bacillus amyloliquefaciens subsp. plantarum)).